The following is a 472-amino-acid chain: Sporozoite surface protein P36p (472 aa).

The first 23 residues, 1-23 (MMKRRRIFMYYCFCFLLKYVAFS), serve as a signal peptide directing secretion. Residues Asn24, Asn29, Asn93, Asn112, and Asn185 are each glycosylated (N-linked (GlcNAc...) asparagine). 6-Cys domains are found at residues 24–157 (NVTN…FKKM) and 160–299 (KIKG…TSKN). Cystine bridges form between Cys64/Cys138, Cys81/Cys136, Cys164/Cys188, Cys202/Cys281, and Cys222/Cys279. Asn295, Asn306, Asn383, Asn396, Asn400, and Asn416 each carry an N-linked (GlcNAc...) asparagine glycan. Positions 359-385 (KMDPSDEDESNENAHNGNRANKDANYS) are disordered. The GPI-anchor amidated serine moiety is linked to residue Ser449. Residues 450 to 472 (SSYYEVFNYFSIAFILIIHMLLW) constitute a propeptide, removed in mature form.

It localises to the cell surface. The protein localises to the cell membrane. Its function is as follows. Involved in sporozoite infection of hepatocytes and replication therein. This chain is Sporozoite surface protein P36p (P52), found in Plasmodium berghei (strain Anka).